The sequence spans 410 residues: Probable ATP-dependent RNA helicase MG308 (410 aa).

Positions 26–179 (VFKLWPFQNI…KKQVINTKVI (154 aa)) constitute a Helicase ATP-binding domain. Position 39 to 46 (39 to 46 (AETGSGKT)) interacts with ATP. The short motif at 126 to 129 (DEID) is the DEID box element. Positions 190 to 357 (LVKHFVVHLN…DLKFLTENNQ (168 aa)) constitute a Helicase C-terminal domain.

Belongs to the DEAD box helicase family.

It carries out the reaction ATP + H2O = ADP + phosphate + H(+). The chain is Probable ATP-dependent RNA helicase MG308 from Mycoplasma genitalium (strain ATCC 33530 / DSM 19775 / NCTC 10195 / G37) (Mycoplasmoides genitalium).